A 268-amino-acid chain; its full sequence is 3-methyl-2-oxobutanoate hydroxymethyltransferase (268 aa).

2 residues coordinate Mg(2+): D46 and D85. 3-methyl-2-oxobutanoate contacts are provided by residues 46 to 47, D85, and K114; that span reads DS. Residue E116 participates in Mg(2+) binding. The active-site Proton acceptor is E183.

This sequence belongs to the PanB family. As to quaternary structure, homodecamer; pentamer of dimers. Mg(2+) serves as cofactor.

The protein resides in the cytoplasm. It catalyses the reaction 3-methyl-2-oxobutanoate + (6R)-5,10-methylene-5,6,7,8-tetrahydrofolate + H2O = 2-dehydropantoate + (6S)-5,6,7,8-tetrahydrofolate. Its pathway is cofactor biosynthesis; coenzyme A biosynthesis. Catalyzes the reversible reaction in which hydroxymethyl group from 5,10-methylenetetrahydrofolate is transferred onto alpha-ketoisovalerate to form ketopantoate. The protein is 3-methyl-2-oxobutanoate hydroxymethyltransferase of Sulfolobus acidocaldarius (strain ATCC 33909 / DSM 639 / JCM 8929 / NBRC 15157 / NCIMB 11770).